A 162-amino-acid polypeptide reads, in one-letter code: Cyanate hydratase (162 aa).

Active-site residues include Arg90, Glu93, and Ser116.

Belongs to the cyanase family.

It catalyses the reaction cyanate + hydrogencarbonate + 3 H(+) = NH4(+) + 2 CO2. In terms of biological role, catalyzes the reaction of cyanate with bicarbonate to produce ammonia and carbon dioxide. The protein is Cyanate hydratase of Populus trichocarpa (Western balsam poplar).